Consider the following 276-residue polypeptide: Cytoplasmic envelopment protein 1 (276 aa).

It belongs to the herpesviridae cytoplasmic envelopment protein 1 family.

Its subcellular location is the virion. The protein resides in the virion tegument. It is found in the host cytoplasm. It localises to the host Golgi apparatus. Its function is as follows. Plays a critical role in cytoplasmic virus egress. Participates in the final step of tegumentation and envelope acquisition within the host cytoplasm. This Equus caballus (Horse) protein is Cytoplasmic envelopment protein 1 (42).